The sequence spans 254 residues: Switch-activating protein 1 (254 aa).

The segment covering 1-10 (MEAPKMELKS) has biased composition (basic and acidic residues). The interval 1 to 30 (MEAPKMELKSYKRKNASLSPSSSPAKAQRT) is disordered. Over residues 16–25 (ASLSPSSSPA) the composition is skewed to low complexity. Residues Ser17 and Ser19 each carry the phosphoserine modification. Tandem repeats lie at residues 221 to 224 (GVNM), 225 to 228 (GTNM), 229 to 232 (GANM), and 233 to 236 (GANM). Residues 221 to 236 (GVNMGTNMGANMGANM) are 4 X 4 AA tandem repeats of G-[ATV]-N-M.

Homodimer.

The protein localises to the nucleus. Binds to sequences required for mating-type switching. Makes a simultaneous contact with both the alpha and beta domains of the switch-activating site SAS1. Also binds to replication fork barrier 1 (RFB1) located within a 78 base pair sequence near the 3' end of the rRNA coding region. This leads to replication fork blockage. It binds the consensus sequence 5'-TA[AG]GCAGNTN[CT]AACG[AC]G-3'. Functionally, has a role in chromosome organization and integrity where it is involved in chromosome segregation. Has a role in sister chromatid cohesion and condensation. This is Switch-activating protein 1 (sap1) from Schizosaccharomyces pombe (strain 972 / ATCC 24843) (Fission yeast).